The sequence spans 676 residues: XK-related protein 5 (676 aa).

Helical transmembrane passes span 37 to 57 (WLAL…FLWF), 114 to 134 (LLEA…VFLA), 140 to 160 (IVPG…LVSY), 206 to 226 (VWVL…LVAQ), 239 to 259 (LFNL…WDSP), 266 to 286 (SFYL…TDFL), and 294 to 314 (LWTV…LVIY). Disordered stretches follow at residues 336–362 (PIED…DSSS), 372–391 (TSLD…GLGE), 495–538 (LEDN…KEGQ), and 598–661 (PIPG…IQRD). Residues 498-509 (NATTQKPPATQE) are compositionally biased toward polar residues.

The protein belongs to the XK family.

The protein resides in the cell membrane. This Mus musculus (Mouse) protein is XK-related protein 5.